The primary structure comprises 309 residues: Dicarboxylate carrier UCP2 (309 aa).

At 1–16 (MVGFKATDVPPTATVK) the chain is on the mitochondrial intermembrane side. Solcar repeat units lie at residues 11–106 (PTAT…VKQF), 114–203 (AGIG…IKDT), and 212–297 (DDLP…LKRA). Residues 16–63 (KFLGAGTAACIADLITFPLDTAKVRLQIQGESQGLARTAASAQYRGVL) form an important for interaction with long-chain fatty acids region. The helical transmembrane segment at 17-40 (FLGAGTAACIADLITFPLDTAKVR) threads the bilayer. At 41–77 (LQIQGESQGLARTAASAQYRGVLGTILTMVRTEGPRS) the chain is on the mitochondrial matrix side. A helical transmembrane segment spans residues 78-103 (LYNGLVAGLQRQMSFASVRIGLYDSV). Over 104–119 (KQFYTKGSEHAGIGSR) the chain is Mitochondrial intermembrane. The helical transmembrane segment at 120–145 (LLAGSTTGALAVAVAQPTDVVKVRFQ) threads the bilayer. Residues 146-173 (AQARAGGGRRYQSTVEAYKTIAREEGIR) lie on the Mitochondrial matrix side of the membrane. Residues 174–199 (GLWKGTSPNVARNAIVNCTELVTYDL) form a helical membrane-spanning segment. Residues 200 to 217 (IKDTLLKANLMTDDLPCH) are Mitochondrial intermembrane-facing. The helical transmembrane segment at 218–242 (FTSAFGAGFCTTVIASPVDVVKTRY) threads the bilayer. The Mitochondrial matrix segment spans residues 243–268 (MNSALGQYHSAGHCALTMLRKEGPRA). The chain crosses the membrane as a helical span at residues 269–294 (FYKGFMPSFLRLGSWNVVMFVTYEQL). Residues 278-285 (LRLGSWNV) are important for interaction with long-chain fatty acids. Over 295-309 (KRALMAAYESREAPF) the chain is Mitochondrial intermembrane.

It belongs to the mitochondrial carrier (TC 2.A.29) family. Homotetramer. Adopts an asymmetrical dimer of dimers functional form. Interacts with MICU1 (when methylated); leading to decrease the calcium sensitivity of MICU1. Expressed in a variety of organs, with predominant expression in the heart, lung and spleen.

The protein localises to the mitochondrion inner membrane. The catalysed reaction is L-aspartate(out) + phosphate(in) + H(+)(in) = L-aspartate(in) + phosphate(out) + H(+)(out). It carries out the reaction oxaloacetate(out) + phosphate(in) + H(+)(in) = oxaloacetate(in) + phosphate(out) + H(+)(out). The enzyme catalyses (S)-malate(out) + phosphate(in) + H(+)(in) = (S)-malate(in) + phosphate(out) + H(+)(out). It catalyses the reaction malonate(out) + phosphate(in) + H(+)(in) = malonate(in) + phosphate(out) + H(+)(out). The catalysed reaction is sulfate(out) + phosphate(in) + H(+)(in) = sulfate(in) + phosphate(out) + H(+)(out). It carries out the reaction (S)-malate(out) = (S)-malate(in). The enzyme catalyses L-aspartate(out) = L-aspartate(in). It catalyses the reaction phosphate(in) = phosphate(out). The catalysed reaction is chloride(in) = chloride(out). It carries out the reaction H(+)(in) = H(+)(out). The enzyme catalyses a long-chain fatty acid(out) = a long-chain fatty acid(in). Its function is as follows. Antiporter that exports dicarboxylate intermediates of the Krebs cycle in exchange for phosphate plus a proton across the inner membrane of mitochondria, a process driven by mitochondrial motive force with an overall impact on glycolysis, glutaminolysis and glutathione-dependent redox balance. Continuous export of oxaloacetate and related four-carbon dicarboxylates from mitochondrial matrix into the cytosol negatively regulates the oxidation of acetyl-CoA substrates via the Krebs cycle lowering the ATP/ADP ratio and reactive oxygen species (ROS) production. May mediate inducible proton entry into the mitochondrial matrix affecting ATP turnover as a protection mechanism against oxidative stress. The proton currents are most likely associated with fatty acid flipping across the inner membrane of mitochondria in a metabolic process regulated by free fatty acids and purine nucleotides. Regulates the use of glucose as a source of energy. Required for glucose-induced DRP1-dependent mitochondrial fission and neuron activation in the ventromedial nucleus of the hypothalamus (VMH). This mitochondrial adaptation mechanism modulates the VMH pool of glucose-excited neurons with an impact on systemic glucose homeostasis. Regulates ROS levels and metabolic reprogramming of macrophages during the resolution phase of inflammation. Attenuates ROS production in response to IL33 to preserve the integrity of the Krebs cycle required for persistent production of itaconate and subsequent GATA3-dependent differentiation of inflammation-resolving alternatively activated macrophages. Can unidirectionally transport anions including L-malate, L-aspartate, phosphate and chloride ions. Does not mediate adaptive thermogenesis. The protein is Dicarboxylate carrier UCP2 (Ucp2) of Rattus norvegicus (Rat).